Consider the following 679-residue polypeptide: MESPAFSKPLKDKTIKKALLGVLGILLVTGGLAHKDSPHLIYNLTWEVTNGEQETVWAVTGNHPLWTWWPDLTPDLCMLALHGPTHWGLDNRPPYSSPPGPPCCSGDKGAVSGCARDCDEPLTSYSPRCNTAWNRMKLAQVTHAPKEGFYVCPGSHRPRWARSCGGPEAYYCASWGCETTGRAAWKPTSSWDYITVSNNLSSPQAPKACKNNGWCNPLVVRFTGPGKRATSWTTGHEWGLRLYISGHDPGLTFGIRLRITDLGPRVPIGPNPVLSDQRPPSRPVPARPPPPSNSTPTGDPLTPPTGDPLTPTKPPQAGTGDRLLNLVQGAYLALNMTNPTKTQECWLCLVSEPPYYEGVAVLGDYTKHETAPTNCSSRAQHKLTLSEVTGQGKCLGAVPKTHQALCNHTEPTVSGSNYLVAPEGTLWACSTGLTPCLSTTVLNLTTDYCVLVELWPKVTYHPSEYVYTQFEPGVRFRREPVSLTLALLLGGLTMGGIAARVGTGTTALVATQQFQQLQAAMHNDLKAVEESITNLERSLTSLSEVVLQNRRGLDLLFLKEGGLCAALKEECCFYADHTGLVRDSMAKLRERLNQRQKLFESGQGWFEGLFNRSPWFTTLISTIMGPLIVLLLILLFGPCILNRLVQFVKDRISVVQALILTQQYHQLKSIDPEEVESRE.

Residues isoleucine 268 to aspartate 321 are disordered. Pro residues-rich tracts occupy residues proline 280–asparagine 293 and leucine 301–proline 314.

This is Retrovirus-related Env polyprotein from Fv-4 locus (Fv4) from Mus musculus (Mouse).